A 456-amino-acid chain; its full sequence is ATP-dependent protease ATPase subunit HslU (456 aa).

Residues Val18, 60 to 65, Asp269, Glu334, and Arg406 contribute to the ATP site; that span reads GVGKTE.

This sequence belongs to the ClpX chaperone family. HslU subfamily. A double ring-shaped homohexamer of HslV is capped on each side by a ring-shaped HslU homohexamer. The assembly of the HslU/HslV complex is dependent on binding of ATP.

Its subcellular location is the cytoplasm. In terms of biological role, ATPase subunit of a proteasome-like degradation complex; this subunit has chaperone activity. The binding of ATP and its subsequent hydrolysis by HslU are essential for unfolding of protein substrates subsequently hydrolyzed by HslV. HslU recognizes the N-terminal part of its protein substrates and unfolds these before they are guided to HslV for hydrolysis. In Desulfosudis oleivorans (strain DSM 6200 / JCM 39069 / Hxd3) (Desulfococcus oleovorans), this protein is ATP-dependent protease ATPase subunit HslU.